Here is a 406-residue protein sequence, read N- to C-terminus: Odorant receptor 42a (406 aa).

Over M1–F44 the chain is Cytoplasmic. The chain crosses the membrane as a helical span at residues F45–I65. Topologically, residues G66–S86 are extracellular. Residues L87–V107 traverse the membrane as a helical segment. At K108–R142 the chain is on the cytoplasmic side. The chain crosses the membrane as a helical span at residues I143–I163. Residues F164–S181 lie on the Extracellular side of the membrane. The helical transmembrane segment at S182–F202 threads the bilayer. Residues Q203 to T271 are Cytoplasmic-facing. A helical membrane pass occupies residues I272–L292. The Extracellular segment spans residues F293–S298. The chain crosses the membrane as a helical span at residues A299 to L319. Residues C320 to Q359 are Cytoplasmic-facing. The helical transmembrane segment at P360 to T380 threads the bilayer. Residues K381–E406 are Extracellular-facing. An N-linked (GlcNAc...) asparagine glycan is attached at N394.

Belongs to the insect chemoreceptor superfamily. Heteromeric odorant receptor channel (TC 1.A.69) family. Or2a subfamily. In terms of assembly, interacts with Orco. Complexes exist early in the endomembrane system in olfactory sensory neurons (OSNs), coupling these complexes to the conserved ciliary trafficking pathway.

It localises to the cell membrane. Its function is as follows. Odorant receptor which mediates acceptance or avoidance behavior, depending on its substrates. The odorant receptor repertoire encodes a large collection of odor stimuli that vary widely in identity, intensity, and duration. May form a complex with Orco to form odorant-sensing units, providing sensitive and prolonged odorant signaling and calcium permeability. Involved in the behavioral responses to butanol, ethyl acetate, propyl acetate, and pentyl acetate. Also responds to pyrazines. The chain is Odorant receptor 42a (Or42a) from Drosophila melanogaster (Fruit fly).